A 283-amino-acid polypeptide reads, in one-letter code: Elongation factor Ts (283 aa).

The tract at residues 79–82 is involved in Mg(2+) ion dislocation from EF-Tu; sequence TDFV.

This sequence belongs to the EF-Ts family.

It localises to the cytoplasm. In terms of biological role, associates with the EF-Tu.GDP complex and induces the exchange of GDP to GTP. It remains bound to the aminoacyl-tRNA.EF-Tu.GTP complex up to the GTP hydrolysis stage on the ribosome. This is Elongation factor Ts from Shewanella sp. (strain ANA-3).